The chain runs to 92 residues: Cell division topological specificity factor (92 aa).

It belongs to the MinE family.

Its function is as follows. Prevents the cell division inhibition by proteins MinC and MinD at internal division sites while permitting inhibition at polar sites. This ensures cell division at the proper site by restricting the formation of a division septum at the midpoint of the long axis of the cell. This chain is Cell division topological specificity factor, found in Symbiobacterium thermophilum (strain DSM 24528 / JCM 14929 / IAM 14863 / T).